The following is a 148-amino-acid chain: Snaclec B9 (148 aa).

A signal peptide spans 1 to 24; the sequence is MGRFIFVSFGLLVVFLSLSGTGAA. Disulfide bonds link Cys27/Cys38, Cys55/Cys144, and Cys121/Cys136. The 112-residue stretch at 34-145 folds into the C-type lectin domain; the sequence is YDQHCYKVFD…CRLLGHFVCK (112 aa). Asn57 and Asn60 each carry an N-linked (GlcNAc...) asparagine glycan.

It belongs to the snaclec family. Heterodimer; disulfide-linked. Expressed by the venom gland.

Its subcellular location is the secreted. Functionally, interferes with one step of hemostasis (modulation of platelet aggregation, or coagulation cascade, for example). In Macrovipera lebetinus (Levantine viper), this protein is Snaclec B9.